Here is a 317-residue protein sequence, read N- to C-terminus: NF-kappa-B inhibitor alpha (317 aa).

Residues 1-39 (MFQAAERPQEWAMEGPRDGLKKERLLDDRHDSGLDSMKD) are disordered. A compositionally biased stretch (basic and acidic residues) spans 15-39 (GPRDGLKKERLLDDRHDSGLDSMKD). Residue Lys-21 forms a Glycyl lysine isopeptide (Lys-Gly) (interchain with G-Cter in SUMO); alternate linkage. Residue Lys-21 forms a Glycyl lysine isopeptide (Lys-Gly) (interchain with G-Cter in ubiquitin); alternate linkage. A Glycyl lysine isopeptide (Lys-Gly) (interchain with G-Cter in ubiquitin) cross-link involves residue Lys-22. The Destruction motif signature appears at 30–36 (HDSGLDS). Residue Ser-32 is modified to Phosphoserine; by IKKA and IKKE. Phosphoserine; by IKKA, IKKB, IKKE and TBK1 is present on Ser-36. Tyr-42 carries the post-translational modification Phosphotyrosine; by Tyr-kinases. A Nuclear export signal motif is present at residues 45 to 54 (MVKELQEIRL). 5 ANK repeats span residues 73-103 (DGDS…DLAF), 110-139 (LQQT…DPEL), 143-172 (RGNT…TPHL), 182-211 (NGHT…DVNA), and 216-245 (NGRT…DVNR). The short motif at 110 to 120 (LQQTPLHLAVI) is the Nuclear import signal element. (3S)-3-hydroxyasparagine; by HIF1AN; partial is present on residues Asn-210 and Asn-244. Phosphoserine; by CK2 occurs at positions 283 and 288. Position 291 is a phosphothreonine; by CK2 (Thr-291). Ser-293 bears the Phosphoserine; by CK2 mark. Residue Thr-299 is modified to Phosphothreonine; by CK2.

Belongs to the NF-kappa-B inhibitor family. As to quaternary structure, interacts with RELA; the interaction requires the nuclear import signal. Part of a 70-90 kDa complex at least consisting of CHUK, IKBKB, NFKBIA, RELA, ELP1 and MAP3K14. Interacts with NKIRAS1 and NKIRAS2. Interacts with isoform 1 and isoform 2 of RWDD3; the interaction enhances sumoylation. Interacts with PRMT2. Interacts with PRKACA in platelets; this interaction is disrupted by thrombin and collagen. Interacts with MEFV. Interacts with DDRGK1; positively regulates NFKBIA phosphorylation and degradation. Interacts with HNRNPA2B1; the interaction may be mediated by the RRM2 domain of HNRNPA2B1, and HNRNPA2B1 may interact simultaneously with FAM76B and either NFKBIA or NFKBIE to form a complex. In terms of assembly, (Microbial infection) Interacts with HBV protein X. Post-translationally, phosphorylated at Ser-32 and Ser-36 by IKKA/CHUK and IKKB/IKBKB; disables inhibition of NF-kappa-B DNA-binding activity. Phosphorylation at positions 32 and 36 is prerequisite to recognition by the SCF(FBXW11) and SCF(BTRC) complexes, leading to polyubiquitination and subsequent degradation. Phosphorylated at Ser-32 in response to FK506 treatment: phosphorylation is independent of IKKA/CHUK and IKKB/IKBKB and promotes NFKBIA degradation, followed by NF-kappa-B activation. Phosphorylated at Tyr-42: its effect is however unclear. According to a report, phosphorylation at Tyr-42 activates NF-kappa-B without triggering proteolytic degradation of NFKBIA. According to another publication, phosphorylation at Tyr-42 inhibits NF-kappa-B activity by preventing phosphorylation at Ser-32 and Ser-36 and subsequent ubiquitination and degradation. Polyubiquitinated at Lys-21 and/or Lys-22 following phosphorylation at Ser-32 and Ser-36. Monoubiquitinated at Lys-21 and/or Lys-22 by UBE2D3. Ubiquitin chain elongation is then performed by CDC34 in cooperation with the SCF(FBXW11) E3 ligase complex, building ubiquitin chains from the UBE2D3-primed NFKBIA-linked ubiquitin. The resulting polyubiquitination leads to protein degradation. Also ubiquitinated by the SCF(BTRC) complex following stimulus-dependent phosphorylation at Ser-32 and Ser-36. Deubiquitinated by USP38, leading to NF-kappa-B inhibition. In terms of processing, sumoylated; sumoylation requires the presence of the nuclear import signal. Sumoylation blocks ubiquitination and proteasome-mediated degradation of the protein thereby increasing the protein stability. Post-translationally, hydroxylated by HIF1AN. (Microbial infection) Deubiquitinated by porcine reproductive and respiratory syndrome virus Nsp2 protein, which thereby interferes with NFKBIA degradation and impairs subsequent NF-kappa-B activation.

The protein resides in the cytoplasm. It localises to the nucleus. Its function is as follows. Inhibits the activity of dimeric NF-kappa-B/REL complexes by trapping REL (RELA/p65 and NFKB1/p50) dimers in the cytoplasm by masking their nuclear localization signals. On cellular stimulation by immune and pro-inflammatory responses, becomes phosphorylated promoting ubiquitination and degradation, enabling the dimeric RELA to translocate to the nucleus and activate transcription. This chain is NF-kappa-B inhibitor alpha (NFKBIA), found in Homo sapiens (Human).